A 417-amino-acid polypeptide reads, in one-letter code: MAIDKHATPMLDQLETGPWPSFISGIKRLRDQHPDARINAVTNDLLGQLEHSYETRKGYWKGGTVSVFGYGGGIIPRFSEVGKVFPSSKEFHTVRVQPPAGNHYTTAMLRQLADTWEKYGSGLITFHGQTGNIMFIGVDTPNTQNFFDEINDYGWDLGGAGPCVRTAMSCVGSARCEMSCTNELKAHRLLVNNFTDDVHRPALPYKFKFKVSGCPNDCQNAIERSDFAVLGTWRDDMKVDQAEVKHYIADKGRQYYIDNVITRCPTKALSLNDDDTLDVNNRDCVRCMHCLNVMPKALHPGDDKGVTILIGGKRTLKIGDLMGTVVVPFKKLETEEDYESLVELAETIIDFWAENGLEHERCGEMIERIGLANFLEGIGIEPDPNMLSHPRQSSYIRMDGWDEAAEEWFARQAEAGR.

Residues Cys-170, Cys-176, Cys-214, Cys-218, Cys-264, Cys-284, Cys-287, and Cys-290 each contribute to the [4Fe-4S] cluster site. Residue Cys-218 coordinates siroheme.

[4Fe-4S] cluster is required as a cofactor. Requires siroheme as cofactor.

It catalyses the reaction [DsrC protein]-trisulfide + NAD(+) + 3 H2O = [DsrC protein]-dithiol + sulfite + NADH + 3 H(+). Its function is as follows. Catalyzes the reduction of sulfite to sulfide. This is the terminal oxidation reaction in sulfate respiration. The protein is Sulfite reductase, dissimilatory-type subunit alpha (dsrA) of Allochromatium vinosum (strain ATCC 17899 / DSM 180 / NBRC 103801 / NCIMB 10441 / D) (Chromatium vinosum).